The following is an 823-amino-acid chain: Leucine--tRNA ligase (823 aa).

The 'HIGH' region motif lies at 41–51 (PYPSGTLHVGH). The 'KMSKS' region signature appears at 580–584 (KMSKS). ATP is bound at residue Lys583.

The protein belongs to the class-I aminoacyl-tRNA synthetase family.

It is found in the cytoplasm. The catalysed reaction is tRNA(Leu) + L-leucine + ATP = L-leucyl-tRNA(Leu) + AMP + diphosphate. This chain is Leucine--tRNA ligase, found in Thermosipho melanesiensis (strain DSM 12029 / CIP 104789 / BI429).